Reading from the N-terminus, the 206-residue chain is Large ribosomal subunit protein uL4 (206 aa).

Belongs to the universal ribosomal protein uL4 family. Part of the 50S ribosomal subunit.

Its function is as follows. One of the primary rRNA binding proteins, this protein initially binds near the 5'-end of the 23S rRNA. It is important during the early stages of 50S assembly. It makes multiple contacts with different domains of the 23S rRNA in the assembled 50S subunit and ribosome. Functionally, forms part of the polypeptide exit tunnel. In Desulfatibacillum aliphaticivorans, this protein is Large ribosomal subunit protein uL4.